The sequence spans 130 residues: Small ribosomal subunit protein uS8 (130 aa).

Belongs to the universal ribosomal protein uS8 family. Part of the 30S ribosomal subunit. Contacts proteins S5 and S12.

One of the primary rRNA binding proteins, it binds directly to 16S rRNA central domain where it helps coordinate assembly of the platform of the 30S subunit. The protein is Small ribosomal subunit protein uS8 of Aliivibrio fischeri (strain ATCC 700601 / ES114) (Vibrio fischeri).